Here is a 555-residue protein sequence, read N- to C-terminus: Xylulose kinase (555 aa).

Residues histidine 88, arginine 158, aspartate 274, and asparagine 275 each contribute to the substrate site. Residues tryptophan 357, 455–456 (GA), and asparagine 459 each bind ATP.

Belongs to the FGGY kinase family.

The protein resides in the cytoplasm. It carries out the reaction D-xylulose + ATP = D-xylulose 5-phosphate + ADP + H(+). The polypeptide is Xylulose kinase (Schizosaccharomyces pombe (strain 972 / ATCC 24843) (Fission yeast)).